An 83-amino-acid polypeptide reads, in one-letter code: Putative membrane protein insertion efficiency factor (83 aa).

Positions Gly-63–Asp-83 are disordered. The segment covering Val-68–Asp-83 has biased composition (basic and acidic residues).

It belongs to the UPF0161 family.

The protein localises to the cell membrane. Functionally, could be involved in insertion of integral membrane proteins into the membrane. The protein is Putative membrane protein insertion efficiency factor of Streptococcus agalactiae serotype Ia (strain ATCC 27591 / A909 / CDC SS700).